The primary structure comprises 367 residues: B2 bradykinin receptor (367 aa).

Over M1 to Q36 the chain is Extracellular. N-linked (GlcNAc...) asparagine glycosylation is found at N3 and N14. Residues A37–L60 traverse the membrane as a helical segment. Residues H61–E69 lie on the Cytoplasmic side of the membrane. The helical transmembrane segment at V70 to A94 threads the bilayer. Over N95 to R107 the chain is Extracellular. C106 and C187 are oxidised to a cystine. Residues V108–I129 traverse the membrane as a helical segment. Topologically, residues D130–K151 are cytoplasmic. A Phosphotyrosine modification is found at Y132. A helical transmembrane segment spans residues L152–M174. Residues K175 to E197 lie on the Extracellular side of the membrane. N183 carries an N-linked (GlcNAc...) asparagine glycan. Residues V198–L224 form a helical membrane-spanning segment. The Cytoplasmic portion of the chain corresponds to Q225–R243. The helical transmembrane segment at A244–L268 threads the bilayer. Residues D269 to D287 lie on the Extracellular side of the membrane. The chain crosses the membrane as a helical span at residues V288–V311. Over G312 to Q367 the chain is Cytoplasmic. Position 323 is a phosphotyrosine (Y323). C327 carries S-palmitoyl cysteine lipidation. S342 carries the post-translational modification Phosphoserine. T345 is subject to Phosphothreonine. A phosphoserine; by GRK6 mark is found at S349 and S351.

The protein belongs to the G-protein coupled receptor 1 family. Bradykinin receptor subfamily. BDKRB2 sub-subfamily. As to quaternary structure, forms a complex with PECAM1 and GNAQ. Interacts with PECAM1.

It is found in the cell membrane. In terms of biological role, receptor for bradykinin. It is associated with G proteins that activate a phosphatidylinositol-calcium second messenger system. The chain is B2 bradykinin receptor (BDKRB2) from Oryctolagus cuniculus (Rabbit).